The primary structure comprises 142 residues: Large ribosomal subunit protein uL11 (142 aa).

The protein belongs to the universal ribosomal protein uL11 family. As to quaternary structure, part of the ribosomal stalk of the 50S ribosomal subunit. Interacts with L10 and the large rRNA to form the base of the stalk. L10 forms an elongated spine to which L12 dimers bind in a sequential fashion forming a multimeric L10(L12)X complex. Post-translationally, one or more lysine residues are methylated.

Functionally, forms part of the ribosomal stalk which helps the ribosome interact with GTP-bound translation factors. This Nitrobacter hamburgensis (strain DSM 10229 / NCIMB 13809 / X14) protein is Large ribosomal subunit protein uL11.